Consider the following 86-residue polypeptide: Anti-adapter protein IraP (86 aa).

Residues 1–36 (MKNLIAELLVKLAEKEEESKELVAQVEALEIVVTAL) are a coiled coil.

Belongs to the IraP family. Interacts with RssB.

It is found in the cytoplasm. Its function is as follows. Inhibits RpoS proteolysis by regulating RssB activity, thereby increasing the stability of the sigma stress factor RpoS especially during phosphate starvation, but also in stationary phase and during nitrogen starvation. Its effect on RpoS stability is due to its interaction with RssB, which probably blocks the interaction of RssB with RpoS, and the consequent delivery of the RssB-RpoS complex to the ClpXP protein degradation pathway. The polypeptide is Anti-adapter protein IraP (Cronobacter sakazakii (strain ATCC BAA-894) (Enterobacter sakazakii)).